The primary structure comprises 1460 residues: Nonribosomal peptide synthetase 6 (1460 aa).

Residues 63-468 (EQAALHPEKI…GRQDQQVKLR (406 aa)) form an adenylation region. The region spanning 600–675 (EPTTEMEIKL…AMATKIKPLS (76 aa)) is the Carrier 1 domain. At serine 636 the chain carries O-(pantetheine 4'-phosphoryl)serine. The tract at residues 712–1135 (VQDVYPCTPL…AVLDPSEAQD (424 aa)) is condensation. Carrier domains lie at 1168-1241 (SPNE…GNEK) and 1236-1312 (SIGN…EETD). Serine 1202 and serine 1273 each carry O-(pantetheine 4'-phosphoryl)serine. The segment at 1303–1324 (ELASSAEETDSPQTETNSNAPY) is disordered. The segment covering 1313–1322 (SPQTETNSNA) has biased composition (polar residues).

It belongs to the NRP synthetase family.

It participates in siderophore biosynthesis. Functionally, NRPS involved in extracellular coprogen-type siderophores biosynthesis. The role of extracellular siderophores in fungal virulence to plants is to supply iron to the fungus during plant infection, but not to act as phytotoxins, depriving their hosts of iron. This is Nonribosomal peptide synthetase 6 from Alternaria brassicicola (Dark leaf spot agent).